The chain runs to 426 residues: MKKISQVLNWLSSLKIAILLLLLIAISCAAGTLIPQQESNQFYYDNFNKNPFLGIINANILLLFEFDHVYTSFWFLFLLIWLGLALSVCSFRRQLPILKSALNWIDYKSPRQIAKLSVAQTIVTNNCSESLEKIKLNLKKQGWNVKETDGRIAARQGVIGRLGPILIHLGMILLMIGATYGSLNGKTIEKFLAPGRSIDLLNNNEEKGLTIELQKFQIERDPQGRAEQYKSIVNVIEPNGSNESKEISVNYPLRYKGLTLYQADWSLAAITIQIDNSPKLQIPIEPISELGEQVWGTVIPTNKDGKNQILLTVDSELGPVNIYDNDGTLLTKLSINKEEKVKGALINIINIIPSSGLLLKHDPGVPLVYLSFAIILIGGSLSIISTKKIWVLHENEKSMIYIGGLSNRNLSGLSKELPNLISFLEN.

3 helical membrane passes run 14 to 34 (LKIAILLLLLIAISCAAGTLI), 72 to 92 (SFWFLFLLIWLGLALSVCSFR), and 162 to 182 (LGPILIHLGMILLMIGATYGS).

This sequence belongs to the Ccs1/CcsB family. May interact with CcsA.

It localises to the cellular thylakoid membrane. In terms of biological role, required during biogenesis of c-type cytochromes (cytochrome c6 and cytochrome f) at the step of heme attachment. The polypeptide is Cytochrome c biogenesis protein CcsB (Prochlorococcus marinus (strain NATL1A)).